We begin with the raw amino-acid sequence, 161 residues long: Small ribosomal subunit protein uS19 (161 aa).

Over residues 1–19 (MARQKKYSGKGGARKKNKQ) the composition is skewed to basic residues. Residues 1-26 (MARQKKYSGKGGARKKNKQKQSVAPR) are disordered.

This sequence belongs to the universal ribosomal protein uS19 family.

Protein S19 forms a complex with S13 that binds strongly to the 16S ribosomal RNA. The protein is Small ribosomal subunit protein uS19 of Methanococcus maripaludis (strain C6 / ATCC BAA-1332).